A 494-amino-acid chain; its full sequence is Beta-glucosidase 29 (494 aa).

A signal peptide spans 1–28 (MAWLGIGMGRQIVPVLVFVAVLCSGVDA). Glutamine 49 is a binding site for a beta-D-glucoside. An N-linked (GlcNAc...) asparagine glycan is attached at asparagine 103. A beta-D-glucoside is bound by residues histidine 138 and 183-184 (NE). Glutamate 184 acts as the Proton donor in catalysis. Cysteine 203 and cysteine 211 are oxidised to a cystine. Asparagine 263 is a glycosylation site (N-linked (GlcNAc...) asparagine). Tyrosine 327 lines the a beta-D-glucoside pocket. Asparagine 352 carries an N-linked (GlcNAc...) asparagine glycan. Glutamate 398 lines the a beta-D-glucoside pocket. Residue glutamate 398 is the Nucleophile of the active site. An N-linked (GlcNAc...) asparagine glycan is attached at asparagine 406. A beta-D-glucoside is bound by residues tryptophan 447, 454–455 (EW), and phenylalanine 463.

Belongs to the glycosyl hydrolase 1 family.

The enzyme catalyses Hydrolysis of terminal, non-reducing beta-D-glucosyl residues with release of beta-D-glucose.. The protein is Beta-glucosidase 29 (BGLU29) of Oryza sativa subsp. japonica (Rice).